We begin with the raw amino-acid sequence, 82 residues long: Cytochrome b559 subunit alpha (82 aa).

Residues 22-36 (VIHFVTLPSIFLAGF) form a helical membrane-spanning segment. Residue His-24 coordinates heme.

The protein belongs to the PsbE/PsbF family. In terms of assembly, heterodimer of an alpha subunit and a beta subunit. PSII is composed of 1 copy each of membrane proteins PsbA, PsbB, PsbC, PsbD, PsbE, PsbF, PsbH, PsbI, PsbJ, PsbK, PsbL, PsbM, PsbT, PsbX, PsbY, PsbZ, Psb30/Ycf12, peripheral proteins PsbO, CyanoQ (PsbQ), PsbU, PsbV and a large number of cofactors. It forms dimeric complexes. Heme b serves as cofactor.

It is found in the cellular thylakoid membrane. In terms of biological role, this b-type cytochrome is tightly associated with the reaction center of photosystem II (PSII). PSII is a light-driven water:plastoquinone oxidoreductase that uses light energy to abstract electrons from H(2)O, generating O(2) and a proton gradient subsequently used for ATP formation. It consists of a core antenna complex that captures photons, and an electron transfer chain that converts photonic excitation into a charge separation. The protein is Cytochrome b559 subunit alpha of Parasynechococcus marenigrum (strain WH8102).